Here is a 295-residue protein sequence, read N- to C-terminus: Transmembrane protein 71 (295 aa).

2 helical membrane passes run 229 to 249 (LLQE…ISAC) and 253 to 273 (FMGE…VAYV).

This sequence belongs to the TMEM71 family.

Its subcellular location is the membrane. The polypeptide is Transmembrane protein 71 (TMEM71) (Homo sapiens (Human)).